Consider the following 439-residue polypeptide: MPETQEPASLNERDPMFEREKEKYERPIVSREYILSYLEGTGRPLTLEDIIAELEVAEDDQEALRRRLRAMERDGQLVRNRRGAYGIVAAMELVRGTVSAHPDGFGFLIPEAGGKDLFLSPREMRKVFHGDTILGRAVGEDRRGRIEGAVVRILERALKHIVGRYYADNGVHYVVPEDRRIPQEFAVVEGEGEGLTPVHGQIVILEITQYPDGRNMPQGHVVEILGEHMAPGMEVEIAVRNYGLPHQWPDEVLAEIKQFSETVPETMKAGRRDLRDLPLVTIDGADAKDFDDAVYAEVIENGFRLTVAIADVATYVCPDSALDREAVTRGNSVYFPRRVIPMLPEILSNGLCSLNPHVDRLCMFCEMEMDAAGRSTGFRFDRGIIGSQRRFTYDEVAAILAGDAELRAQDAAMVPHLEALHSLYESFAKARERRGTIEF.

The disordered stretch occupies residues 1–22 (MPETQEPASLNERDPMFEREKE). Over residues 11 to 22 (NERDPMFEREKE) the composition is skewed to basic and acidic residues. Residues 271-439 (RRDLRDLPLV…ARERRGTIEF (169 aa)) enclose the RNB domain.

This sequence belongs to the RNR ribonuclease family. RNase R subfamily.

It localises to the cytoplasm. The catalysed reaction is Exonucleolytic cleavage in the 3'- to 5'-direction to yield nucleoside 5'-phosphates.. Its function is as follows. 3'-5' exoribonuclease that releases 5'-nucleoside monophosphates and is involved in maturation of structured RNAs. This Acidithiobacillus ferrooxidans (Thiobacillus ferrooxidans) protein is Ribonuclease R (rnr).